Reading from the N-terminus, the 278-residue chain is Non-homologous end joining protein Ku (278 aa).

A Ku domain is found at 9-172; that stretch reads ISFGLVNIPV…MHFAQELVDV (164 aa). Positions 255–278 are disordered; the sequence is NQTGAGAKKKPAKTAKRGKSRKAA. Residues 261–278 show a composition bias toward basic residues; the sequence is AKKKPAKTAKRGKSRKAA.

Belongs to the prokaryotic Ku family. As to quaternary structure, homodimer. Interacts with LigD.

Functionally, with LigD forms a non-homologous end joining (NHEJ) DNA repair enzyme, which repairs dsDNA breaks with reduced fidelity. Binds linear dsDNA with 5'- and 3'- overhangs but not closed circular dsDNA nor ssDNA. Recruits and stimulates the ligase activity of LigD. This is Non-homologous end joining protein Ku from Opitutus terrae (strain DSM 11246 / JCM 15787 / PB90-1).